The following is a 433-amino-acid chain: Probable phosphoglucosamine mutase (433 aa).

S91 functions as the Phosphoserine intermediate in the catalytic mechanism. Mg(2+) is bound by residues S91, D229, D231, and D233. Phosphoserine is present on S91.

The protein belongs to the phosphohexose mutase family. Mg(2+) is required as a cofactor. Activated by phosphorylation.

It catalyses the reaction alpha-D-glucosamine 1-phosphate = D-glucosamine 6-phosphate. Catalyzes the conversion of glucosamine-6-phosphate to glucosamine-1-phosphate. The chain is Probable phosphoglucosamine mutase from Methanococcoides burtonii (strain DSM 6242 / NBRC 107633 / OCM 468 / ACE-M).